The chain runs to 109 residues: Tektin-3 (109 aa).

It belongs to the tektin family. In terms of assembly, microtubule inner protein component of sperm flagellar doublet microtubules. Interacts with TEKT1, TEKT2, TEKT4 and TEKT5. Interacts with CCDC38. Post-translationally, N- and O-glycosylated. In terms of processing, may be proteolytically processed during the epididymal transit of spermatozoa. Ubiquitinated, leading to its degradation. Deubiquitinated by USP16, promoting its stability.

Its subcellular location is the cytoplasm. The protein resides in the cytoskeleton. The protein localises to the cilium axoneme. It localises to the flagellum axoneme. It is found in the cytoplasmic vesicle. Its subcellular location is the secretory vesicle. The protein resides in the acrosome outer membrane. Functionally, microtubule inner protein (MIP) part of the dynein-decorated doublet microtubules (DMTs) in cilia and flagellar axoneme. Forms filamentous polymers in the walls of ciliary and flagellar microtubules. Required for normal sperm mobility. In Mesocricetus auratus (Golden hamster), this protein is Tektin-3.